We begin with the raw amino-acid sequence, 185 residues long: Threonylcarbamoyl-AMP synthase (185 aa).

The region spanning 5-185 (NWRVRLAARI…RDGRTGQRLR (181 aa)) is the YrdC-like domain.

This sequence belongs to the SUA5 family. TsaC subfamily.

It is found in the cytoplasm. It carries out the reaction L-threonine + hydrogencarbonate + ATP = L-threonylcarbamoyladenylate + diphosphate + H2O. In terms of biological role, required for the formation of a threonylcarbamoyl group on adenosine at position 37 (t(6)A37) in tRNAs that read codons beginning with adenine. Catalyzes the conversion of L-threonine, HCO(3)(-)/CO(2) and ATP to give threonylcarbamoyl-AMP (TC-AMP) as the acyladenylate intermediate, with the release of diphosphate. The polypeptide is Threonylcarbamoyl-AMP synthase (Nitrosococcus oceani (strain ATCC 19707 / BCRC 17464 / JCM 30415 / NCIMB 11848 / C-107)).